We begin with the raw amino-acid sequence, 343 residues long: LRP2-binding protein (343 aa).

The TPR repeat unit spans residues 58–91 (SQATFLLGQLHYVQGCYAEAELIFDRIKDKDPQA). 6 Sel1-like repeats span residues 92–124 (LYQL…FWDS), 132–167 (YAAL…DNGN), 172–205 (VKAQ…GNGS), 206–241 (LESQ…ERGS), 242–273 (VYAQ…EYKD), and 293–328 (AIGM…RIDP).

It localises to the cytoplasm. May act as an adapter that regulates LRP2 function. The sequence is that of LRP2-binding protein (lrp2bp) from Danio rerio (Zebrafish).